The primary structure comprises 1242 residues: DNA polymerase catalytic subunit (1242 aa).

Disordered regions lie at residues 14 to 38, 644 to 665, and 1109 to 1162; these read GAVA…RPPQ, LQSA…SSSS, and APQG…RKPP. Low complexity predominate over residues 653 to 665; sequence GVSPGSGSNSSSS. Over residues 1111-1125 the composition is skewed to polar residues; it reads QGSSDNGDSVTTGVV. The span at 1145–1155 shows a compositional bias: basic and acidic residues; that stretch reads ESNRRGGEPAK.

This sequence belongs to the DNA polymerase type-B family. In terms of assembly, forms a complex with the ssDNA-binding protein UL57, the DNA polymerase processivity factor UL44, and the alkaline exonuclease UL98. Interacts with the putative helicase-primase complex composed of UL70, UL102 and UL105 proteins; these interactions may coordinate leading and lagging strand DNA synthesis at the replication fork.

It is found in the host nucleus. The enzyme catalyses DNA(n) + a 2'-deoxyribonucleoside 5'-triphosphate = DNA(n+1) + diphosphate. Functionally, replicates viral genomic DNA in the late phase of lytic infection, producing long concatemeric DNA. The replication complex is composed of six viral proteins: the DNA polymerase, processivity factor, primase, primase-associated factor, helicase, and ssDNA-binding protein. The sequence is that of DNA polymerase catalytic subunit (UL54) from Homo sapiens (Human).